Reading from the N-terminus, the 263-residue chain is Histidine racemase (263 aa).

Cysteine 67 functions as the Proton acceptor in the catalytic mechanism. Cysteine 209 (proton donor) is an active-site residue.

The protein belongs to the histidine racemase family. As to quaternary structure, homodimer.

It carries out the reaction L-histidine = D-histidine. In terms of biological role, cofactor-independent isomerase that catalyzes the reversible conversion of L-histidine to D-histidine. May play a role in growth of F.nucleatum. This is Histidine racemase from Fusobacterium nucleatum subsp. nucleatum (strain ATCC 23726 / VPI 4351).